Consider the following 207-residue polypeptide: Ribosomal RNA small subunit methyltransferase G (207 aa).

S-adenosyl-L-methionine-binding positions include Gly-73, Leu-78, Val-124–Glu-125, and Arg-139.

This sequence belongs to the methyltransferase superfamily. RNA methyltransferase RsmG family.

Its subcellular location is the cytoplasm. It carries out the reaction guanosine(527) in 16S rRNA + S-adenosyl-L-methionine = N(7)-methylguanosine(527) in 16S rRNA + S-adenosyl-L-homocysteine. Its function is as follows. Specifically methylates the N7 position of guanine in position 527 of 16S rRNA. In Shigella dysenteriae serotype 1 (strain Sd197), this protein is Ribosomal RNA small subunit methyltransferase G.